The chain runs to 421 residues: UDP-N-acetylglucosamine 1-carboxyvinyltransferase 1 (421 aa).

22–23 (KN) provides a ligand contact to phosphoenolpyruvate. Position 95 (Arg-95) interacts with UDP-N-acetyl-alpha-D-glucosamine. Catalysis depends on Cys-119, which acts as the Proton donor. Cys-119 is modified (2-(S-cysteinyl)pyruvic acid O-phosphothioketal). UDP-N-acetyl-alpha-D-glucosamine contacts are provided by residues 124–128 (RPIEQ), Asp-308, and Val-330.

The protein belongs to the EPSP synthase family. MurA subfamily.

Its subcellular location is the cytoplasm. It catalyses the reaction phosphoenolpyruvate + UDP-N-acetyl-alpha-D-glucosamine = UDP-N-acetyl-3-O-(1-carboxyvinyl)-alpha-D-glucosamine + phosphate. Its pathway is cell wall biogenesis; peptidoglycan biosynthesis. Cell wall formation. Adds enolpyruvyl to UDP-N-acetylglucosamine. This chain is UDP-N-acetylglucosamine 1-carboxyvinyltransferase 1, found in Staphylococcus aureus (strain MW2).